We begin with the raw amino-acid sequence, 51 residues long: Cytochrome b559 subunit beta (51 aa).

Residues Trp26–Ser42 traverse the membrane as a helical segment. His30 contributes to the heme binding site.

It belongs to the PsbE/PsbF family. As to quaternary structure, heterodimer of an alpha subunit and a beta subunit. PSII is composed of 1 copy each of membrane proteins PsbA, PsbB, PsbC, PsbD, PsbE, PsbF, PsbH, PsbI, PsbJ, PsbK, PsbL, PsbM, PsbT, PsbY, PsbZ, Psb30/Ycf12, at least 3 peripheral proteins of the oxygen-evolving complex and a large number of cofactors. It forms dimeric complexes. It depends on heme b as a cofactor.

The protein resides in the plastid. It is found in the chloroplast thylakoid membrane. In terms of biological role, this b-type cytochrome is tightly associated with the reaction center of photosystem II (PSII). PSII is a light-driven water:plastoquinone oxidoreductase that uses light energy to abstract electrons from H(2)O, generating O(2) and a proton gradient subsequently used for ATP formation. It consists of a core antenna complex that captures photons, and an electron transfer chain that converts photonic excitation into a charge separation. The protein is Cytochrome b559 subunit beta of Bigelowiella natans (Pedinomonas minutissima).